Consider the following 231-residue polypeptide: Phosphatidylserine decarboxylase proenzyme (231 aa).

Catalysis depends on Ser189, which acts as the Schiff-base intermediate with substrate; via pyruvic acid. Ser189 bears the Pyruvic acid (Ser); by autocatalysis mark.

This sequence belongs to the phosphatidylserine decarboxylase family. PSD-A subfamily. As to quaternary structure, heterodimer of a large membrane-associated beta subunit and a small pyruvoyl-containing alpha subunit. Pyruvate serves as cofactor. In terms of processing, is synthesized initially as an inactive proenzyme. Formation of the active enzyme involves a self-maturation process in which the active site pyruvoyl group is generated from an internal serine residue via an autocatalytic post-translational modification. Two non-identical subunits are generated from the proenzyme in this reaction, and the pyruvate is formed at the N-terminus of the alpha chain, which is derived from the carboxyl end of the proenzyme. The post-translation cleavage follows an unusual pathway, termed non-hydrolytic serinolysis, in which the side chain hydroxyl group of the serine supplies its oxygen atom to form the C-terminus of the beta chain, while the remainder of the serine residue undergoes an oxidative deamination to produce ammonia and the pyruvoyl prosthetic group on the alpha chain.

The protein localises to the cell membrane. The catalysed reaction is a 1,2-diacyl-sn-glycero-3-phospho-L-serine + H(+) = a 1,2-diacyl-sn-glycero-3-phosphoethanolamine + CO2. It participates in phospholipid metabolism; phosphatidylethanolamine biosynthesis; phosphatidylethanolamine from CDP-diacylglycerol: step 2/2. Catalyzes the formation of phosphatidylethanolamine (PtdEtn) from phosphatidylserine (PtdSer). This is Phosphatidylserine decarboxylase proenzyme from Chelativorans sp. (strain BNC1).